Here is a 341-residue protein sequence, read N- to C-terminus: tRNA N6-adenosine threonylcarbamoyltransferase (341 aa).

2 residues coordinate Fe cation: His111 and His115. Substrate-binding positions include Leu134–Gly138, Asp167, Gly180, and Asn276. Asp304 contributes to the Fe cation binding site.

Belongs to the KAE1 / TsaD family. Fe(2+) is required as a cofactor.

Its subcellular location is the cytoplasm. It carries out the reaction L-threonylcarbamoyladenylate + adenosine(37) in tRNA = N(6)-L-threonylcarbamoyladenosine(37) in tRNA + AMP + H(+). Required for the formation of a threonylcarbamoyl group on adenosine at position 37 (t(6)A37) in tRNAs that read codons beginning with adenine. Is involved in the transfer of the threonylcarbamoyl moiety of threonylcarbamoyl-AMP (TC-AMP) to the N6 group of A37, together with TsaE and TsaB. TsaD likely plays a direct catalytic role in this reaction. This chain is tRNA N6-adenosine threonylcarbamoyltransferase, found in Pseudomonas fluorescens (strain SBW25).